The primary structure comprises 277 residues: 14-3-3 protein (277 aa).

The interval 252 to 277 is disordered; the sequence is LQTQEQQQQPVGEGAEAPKVEATEQQ. Basic and acidic residues predominate over residues 267–277; it reads EAPKVEATEQQ.

This sequence belongs to the 14-3-3 family.

The polypeptide is 14-3-3 protein (Eimeria tenella (Coccidian parasite)).